A 259-amino-acid polypeptide reads, in one-letter code: Small ribosomal subunit protein uS2 (259 aa).

A disordered region spans residues Val228–Met259. Positions Glu233–Met259 are enriched in acidic residues.

It belongs to the universal ribosomal protein uS2 family.

This Thermosipho africanus (strain TCF52B) protein is Small ribosomal subunit protein uS2.